The chain runs to 363 residues: Peptide chain release factor 1 (363 aa).

An N5-methylglutamine modification is found at Gln237.

This sequence belongs to the prokaryotic/mitochondrial release factor family. In terms of processing, methylated by PrmC. Methylation increases the termination efficiency of RF1.

The protein resides in the cytoplasm. Functionally, peptide chain release factor 1 directs the termination of translation in response to the peptide chain termination codons UAG and UAA. The sequence is that of Peptide chain release factor 1 from Marinobacter nauticus (strain ATCC 700491 / DSM 11845 / VT8) (Marinobacter aquaeolei).